Consider the following 176-residue polypeptide: RNA 2',3'-cyclic phosphodiesterase (176 aa).

The active-site Proton donor is histidine 43. Short sequence motifs (HXTX) lie at residues 43 to 46 and 125 to 128; these read HLTL and HITL. Histidine 125 functions as the Proton acceptor in the catalytic mechanism.

It belongs to the 2H phosphoesterase superfamily. ThpR family. Monomer.

The catalysed reaction is a 3'-end 2',3'-cyclophospho-ribonucleotide-RNA + H2O = a 3'-end 2'-phospho-ribonucleotide-RNA + H(+). Functionally, hydrolyzes RNA 2',3'-cyclic phosphodiester to an RNA 2'-phosphomonoester. In vitro, can also ligate 5' and 3' half-tRNA molecules with 2',3'-cyclic phosphate and 5'-hydroxyl termini, respectively, to the product containing the 2'-5' phosphodiester linkage. This reaction does not require ATP and is reversible. This is RNA 2',3'-cyclic phosphodiesterase from Escherichia coli (strain K12).